We begin with the raw amino-acid sequence, 213 residues long: GTP cyclohydrolase 1 (213 aa).

Zn(2+) is bound by residues Cys-104, His-107, and Cys-175.

Belongs to the GTP cyclohydrolase I family. As to quaternary structure, homomer.

It catalyses the reaction GTP + H2O = 7,8-dihydroneopterin 3'-triphosphate + formate + H(+). Its pathway is cofactor biosynthesis; 7,8-dihydroneopterin triphosphate biosynthesis; 7,8-dihydroneopterin triphosphate from GTP: step 1/1. The sequence is that of GTP cyclohydrolase 1 from Brucella suis (strain ATCC 23445 / NCTC 10510).